The following is a 281-amino-acid chain: 2-dehydro-3-deoxyphosphooctonate aldolase (281 aa).

This sequence belongs to the KdsA family.

It localises to the cytoplasm. The catalysed reaction is D-arabinose 5-phosphate + phosphoenolpyruvate + H2O = 3-deoxy-alpha-D-manno-2-octulosonate-8-phosphate + phosphate. It participates in carbohydrate biosynthesis; 3-deoxy-D-manno-octulosonate biosynthesis; 3-deoxy-D-manno-octulosonate from D-ribulose 5-phosphate: step 2/3. Its pathway is bacterial outer membrane biogenesis; lipopolysaccharide biosynthesis. The protein is 2-dehydro-3-deoxyphosphooctonate aldolase of Pseudomonas fluorescens (strain Pf0-1).